Reading from the N-terminus, the 384-residue chain is N-acetylneuraminate epimerase (384 aa).

The first 29 residues, Met1–Ala29, serve as a signal peptide directing secretion. 7 Kelch repeats span residues Val51–Asn95, Lys97–Asn149, Thr151–Tyr184, Asn185–Asn230, Leu233–Ala282, Gln304–Asp353, and Val355–Lys384. Glu239 functions as the Proton acceptor in the catalytic mechanism.

It belongs to the NanM family. In terms of assembly, homodimer.

It localises to the periplasm. The catalysed reaction is N-acetyl-alpha-neuraminate = N-acetyl-beta-neuraminate. Converts alpha-N-acetylneuranimic acid (Neu5Ac) to the beta-anomer, accelerating the equilibrium between the alpha- and beta-anomers. Probably facilitates sialidase-negative bacteria to compete successfully for limited amounts of extracellular Neu5Ac, which is likely taken up in the beta-anomer. In addition, the rapid removal of sialic acid from solution might be advantageous to the bacterium to damp down host responses. This chain is N-acetylneuraminate epimerase, found in Salmonella typhi.